A 225-amino-acid polypeptide reads, in one-letter code: UPF0758 protein Spea_3837 (225 aa).

The MPN domain occupies 102 to 224 (ILSDPDLTRD…IVSFAERGWI (123 aa)). H173, H175, and D186 together coordinate Zn(2+). The short motif at 173-186 (HNHPSGIAEPSTAD) is the JAMM motif element.

This sequence belongs to the UPF0758 family.

This is UPF0758 protein Spea_3837 from Shewanella pealeana (strain ATCC 700345 / ANG-SQ1).